The following is a 151-amino-acid chain: Histone H2A.2.2 (151 aa).

Residue methionine 1 is modified to N-acetylmethionine. Positions 129-151 (EKAEKAGTKAKSPKKATKSPKKA) are disordered. Over residues 139–151 (KSPKKATKSPKKA) the composition is skewed to basic residues. 2 consecutive short sequence motifs (SPKK motif) follow at residues 140–143 (SPKK) and 147–150 (SPKK).

This sequence belongs to the histone H2A family. The nucleosome is a histone octamer containing two molecules each of H2A, H2B, H3 and H4 assembled in one H3-H4 heterotetramer and two H2A-H2B heterodimers. The octamer wraps approximately 147 bp of DNA. Post-translationally, phosphorylated within its C-terminal part, probably at the SPKK motifs.

The protein resides in the nucleus. Its subcellular location is the chromosome. Functionally, core component of nucleosome. Nucleosomes wrap and compact DNA into chromatin, limiting DNA accessibility to the cellular machineries which require DNA as a template. Histones thereby play a central role in transcription regulation, DNA repair, DNA replication and chromosomal stability. DNA accessibility is regulated via a complex set of post-translational modifications of histones, also called histone code, and nucleosome remodeling. This chain is Histone H2A.2.2, found in Triticum aestivum (Wheat).